Here is a 345-residue protein sequence, read N- to C-terminus: MNSKLFSPYTIKNVTLKNRIVMSPMCMYSSGNEDGSVTNFHLIHYGTRAAGQVGLVMVEATAVLAEGRISNKDLGIWDDNLIEGLHKTTTFIHDNGAKAAIQLAHAGRKAELDTNAFAPSAIPFNDKMKIPVEMNIQQIKETILAFQRAALRSKQAGFDVIELHGAHGYLINEFLSPLTNKRTDKYGGSPENRYRFLREIIDSVNEVWDGPIFVRISANDYHPDGLTVQDYVQYTKWMKEQGIDLIDCSSGAVVPAHIDVYPGYQVQYAKHIKEHTKIATGAVGLITTGSQAEQILNNNEADLIFIGRELLRNPYFPRIAANELGFELQEPYQYKRAPGKIHTNK.

23-26 (SPMC) provides a ligand contact to FMN. Tyr28 is a substrate binding site. The FMN site is built by Ala60 and Gln102. 164 to 167 (HGAH) is a substrate binding site. FMN contacts are provided by residues Arg215 and 307-308 (GR).

The protein belongs to the NADH:flavin oxidoreductase/NADH oxidase family. NamA subfamily. Homotetramer. The cofactor is FMN.

The catalysed reaction is A + NADPH + H(+) = AH2 + NADP(+). Functionally, catalyzes the reduction of the double bond of an array of alpha,beta-unsaturated aldehydes and ketones. It also reduces the nitro group of nitroester and nitroaromatic compounds. It could have a role in detoxification processes. In Bacillus cereus (strain B4264), this protein is NADPH dehydrogenase.